A 190-amino-acid polypeptide reads, in one-letter code: Orotate phosphoribosyltransferase (190 aa).

Residues arginine 101, lysine 102, lysine 105, histidine 107, and 128-136 contribute to the 5-phospho-alpha-D-ribose 1-diphosphate site; that span reads EDVVTTGGS. 2 residues coordinate orotate: threonine 132 and arginine 160.

This sequence belongs to the purine/pyrimidine phosphoribosyltransferase family. PyrE subfamily. Homodimer. Mg(2+) serves as cofactor.

It catalyses the reaction orotidine 5'-phosphate + diphosphate = orotate + 5-phospho-alpha-D-ribose 1-diphosphate. The protein operates within pyrimidine metabolism; UMP biosynthesis via de novo pathway; UMP from orotate: step 1/2. Its function is as follows. Catalyzes the transfer of a ribosyl phosphate group from 5-phosphoribose 1-diphosphate to orotate, leading to the formation of orotidine monophosphate (OMP). The sequence is that of Orotate phosphoribosyltransferase from Synechococcus sp. (strain CC9605).